Consider the following 226-residue polypeptide: Lipoprotein-releasing system ATP-binding protein LolD (226 aa).

The region spanning 5–226 (LKATNINKIY…LLRNGHWENY (222 aa)) is the ABC transporter domain. 41–48 (GTSGSGKS) contributes to the ATP binding site.

This sequence belongs to the ABC transporter superfamily. Lipoprotein translocase (TC 3.A.1.125) family. The complex is composed of two ATP-binding proteins (LolD) and two transmembrane proteins (LolC and LolE).

The protein localises to the cell inner membrane. Its function is as follows. Part of the ABC transporter complex LolCDE involved in the translocation of mature outer membrane-directed lipoproteins, from the inner membrane to the periplasmic chaperone, LolA. Responsible for the formation of the LolA-lipoprotein complex in an ATP-dependent manner. The chain is Lipoprotein-releasing system ATP-binding protein LolD from Psychrobacter arcticus (strain DSM 17307 / VKM B-2377 / 273-4).